The primary structure comprises 127 residues: Small ribosomal subunit protein uS13 (127 aa).

Residues 90–127 (RRHRQGLPVRGQRTRTNARTRRGRRLTVAGKKKTPAKK) form a disordered region. Positions 101 to 127 (QRTRTNARTRRGRRLTVAGKKKTPAKK) are enriched in basic residues.

It belongs to the universal ribosomal protein uS13 family. Part of the 30S ribosomal subunit. Forms a loose heterodimer with protein S19. Forms two bridges to the 50S subunit in the 70S ribosome.

Its function is as follows. Located at the top of the head of the 30S subunit, it contacts several helices of the 16S rRNA. In the 70S ribosome it contacts the 23S rRNA (bridge B1a) and protein L5 of the 50S subunit (bridge B1b), connecting the 2 subunits; these bridges are implicated in subunit movement. Contacts the tRNAs in the A and P-sites. This Synechocystis sp. (strain ATCC 27184 / PCC 6803 / Kazusa) protein is Small ribosomal subunit protein uS13.